The following is a 200-amino-acid chain: Phospholipase A2 inhibitor NAI (200 aa).

The signal sequence occupies residues 1–19; the sequence is MKSLLFCCLFGTFLATGMC. Intrachain disulfides connect cysteine 22-cysteine 46, cysteine 25-cysteine 32, cysteine 39-cysteine 67, cysteine 73-cysteine 94, cysteine 95-cysteine 100, cysteine 120-cysteine 145, cysteine 138-cysteine 165, and cysteine 171-cysteine 191.

Belongs to the CNF-like-inhibitor family. In terms of assembly, heterotrimer of 2 subunits A and 1 subunit B; non-covalently linked. As to expression, expressed by the liver.

It is found in the secreted. Functionally, inhibits the enzymatic activity of all phospholipase A2 tested, binding with micromole to nanomole affinity. This Notechis ater (Black tiger snake) protein is Phospholipase A2 inhibitor NAI.